A 341-amino-acid chain; its full sequence is N-acetyl-gamma-glutamyl-phosphate reductase 2 (341 aa).

Cys146 is an active-site residue.

Belongs to the NAGSA dehydrogenase family. Type 1 subfamily.

The protein localises to the cytoplasm. It carries out the reaction N-acetyl-L-glutamate 5-semialdehyde + phosphate + NADP(+) = N-acetyl-L-glutamyl 5-phosphate + NADPH + H(+). It participates in amino-acid biosynthesis; L-arginine biosynthesis; N(2)-acetyl-L-ornithine from L-glutamate: step 3/4. Functionally, catalyzes the NADPH-dependent reduction of N-acetyl-5-glutamyl phosphate to yield N-acetyl-L-glutamate 5-semialdehyde. In Lactiplantibacillus plantarum (strain ATCC BAA-793 / NCIMB 8826 / WCFS1) (Lactobacillus plantarum), this protein is N-acetyl-gamma-glutamyl-phosphate reductase 2.